The following is a 657-amino-acid chain: UvrABC system protein B (657 aa).

In terms of domain architecture, Helicase ATP-binding spans 25–182 (KSIKQGNEFQ…KKLIEIQYER (158 aa)). ATP is bound at residue 38-45 (GVTGSGKT). The short motif at 91 to 114 (YYDYYQPEAYVPQTDTFIEKDASI) is the Beta-hairpin element. Residues 429 to 595 (QIDDLYTEIQ…TINKEVRELI (167 aa)) enclose the Helicase C-terminal domain. One can recognise a UVR domain in the interval 621–656 (KKLIKEYTDEMKLAAKNLQFERAAQLRDKIEELKGK).

The protein belongs to the UvrB family. In terms of assembly, forms a heterotetramer with UvrA during the search for lesions. Interacts with UvrC in an incision complex.

The protein resides in the cytoplasm. In terms of biological role, the UvrABC repair system catalyzes the recognition and processing of DNA lesions. A damage recognition complex composed of 2 UvrA and 2 UvrB subunits scans DNA for abnormalities. Upon binding of the UvrA(2)B(2) complex to a putative damaged site, the DNA wraps around one UvrB monomer. DNA wrap is dependent on ATP binding by UvrB and probably causes local melting of the DNA helix, facilitating insertion of UvrB beta-hairpin between the DNA strands. Then UvrB probes one DNA strand for the presence of a lesion. If a lesion is found the UvrA subunits dissociate and the UvrB-DNA preincision complex is formed. This complex is subsequently bound by UvrC and the second UvrB is released. If no lesion is found, the DNA wraps around the other UvrB subunit that will check the other stand for damage. The polypeptide is UvrABC system protein B (Clostridium botulinum (strain Eklund 17B / Type B)).